Reading from the N-terminus, the 251-residue chain is Uridylate kinase (251 aa).

Position 24–27 (lysine 24–glycine 27) interacts with ATP. The interval glycine 32–glycine 37 is involved in allosteric activation by GTP. Glycine 66 contributes to the UMP binding site. The ATP site is built by glycine 67 and arginine 71. UMP-binding positions include aspartate 86 and threonine 147–threonine 154. Residues asparagine 175, tyrosine 181, and aspartate 184 each contribute to the ATP site.

Belongs to the UMP kinase family. Homohexamer.

It localises to the cytoplasm. The catalysed reaction is UMP + ATP = UDP + ADP. It participates in pyrimidine metabolism; CTP biosynthesis via de novo pathway; UDP from UMP (UMPK route): step 1/1. Its activity is regulated as follows. Allosterically activated by GTP. Inhibited by UTP. Catalyzes the reversible phosphorylation of UMP to UDP. The chain is Uridylate kinase from Ruegeria pomeroyi (strain ATCC 700808 / DSM 15171 / DSS-3) (Silicibacter pomeroyi).